Reading from the N-terminus, the 428-residue chain is 3-phosphoshikimate 1-carboxyvinyltransferase (428 aa).

Residues Lys-23, Ser-24, and Arg-28 each coordinate 3-phosphoshikimate. Lys-23 contributes to the phosphoenolpyruvate binding site. Positions 97 and 125 each coordinate phosphoenolpyruvate. Ser-170, Ser-171, Gln-172, Ser-198, Asp-314, Asn-337, and Lys-341 together coordinate 3-phosphoshikimate. Gln-172 provides a ligand contact to phosphoenolpyruvate. The Proton acceptor role is filled by Asp-314. Phosphoenolpyruvate is bound by residues Arg-345, Arg-387, and Lys-412.

Belongs to the EPSP synthase family. Monomer.

Its subcellular location is the cytoplasm. It carries out the reaction 3-phosphoshikimate + phosphoenolpyruvate = 5-O-(1-carboxyvinyl)-3-phosphoshikimate + phosphate. It functions in the pathway metabolic intermediate biosynthesis; chorismate biosynthesis; chorismate from D-erythrose 4-phosphate and phosphoenolpyruvate: step 6/7. Catalyzes the transfer of the enolpyruvyl moiety of phosphoenolpyruvate (PEP) to the 5-hydroxyl of shikimate-3-phosphate (S3P) to produce enolpyruvyl shikimate-3-phosphate and inorganic phosphate. In Erwinia tasmaniensis (strain DSM 17950 / CFBP 7177 / CIP 109463 / NCPPB 4357 / Et1/99), this protein is 3-phosphoshikimate 1-carboxyvinyltransferase.